The following is a 601-amino-acid chain: Rhizobactin siderophore biosynthesis protein RhbF (601 aa).

The protein belongs to the IucA/IucC family.

Its pathway is siderophore biosynthesis; rhizobactin biosynthesis. This is Rhizobactin siderophore biosynthesis protein RhbF (rhbF) from Rhizobium meliloti (strain 1021) (Ensifer meliloti).